Reading from the N-terminus, the 808-residue chain is Phenylalanine--tRNA ligase beta subunit (808 aa).

Residues 40 to 155 enclose the tRNA-binding domain; the sequence is NQGATGVVVG…DDVEIGSDAL (116 aa). One can recognise a B5 domain in the interval 409–484; the sequence is IEEPVVSLNL…RLYGYDNIPT (76 aa). 4 residues coordinate Mg(2+): Asp-462, Asp-468, Glu-471, and Glu-472. The region spanning 714–807 is the FDX-ACB domain; that stretch reads PRFPAISRDI…LEASTGAVLR (94 aa).

This sequence belongs to the phenylalanyl-tRNA synthetase beta subunit family. Type 1 subfamily. As to quaternary structure, tetramer of two alpha and two beta subunits. Requires Mg(2+) as cofactor.

The protein resides in the cytoplasm. The catalysed reaction is tRNA(Phe) + L-phenylalanine + ATP = L-phenylalanyl-tRNA(Phe) + AMP + diphosphate + H(+). The chain is Phenylalanine--tRNA ligase beta subunit (pheT) from Halalkalibacterium halodurans (strain ATCC BAA-125 / DSM 18197 / FERM 7344 / JCM 9153 / C-125) (Bacillus halodurans).